A 279-amino-acid chain; its full sequence is Large ribosomal subunit protein uL2 (279 aa).

Disordered stretches follow at residues 1 to 43 and 207 to 279; these read MGIK…TAGR and KAGR…PGKH. Polar residues predominate over residues 8-22; sequence PTTNGRRNMTASDFS. The segment covering 23-33 has biased composition (basic and acidic residues); it reads EITKTKPEKSL. Positions 34–43 are enriched in polar residues; that stretch reads LDSQSHTAGR. Composition is skewed to basic residues over residues 209 to 219 and 254 to 279; these read GRTRWQGKRPT and TLGK…PGKH.

It belongs to the universal ribosomal protein uL2 family. In terms of assembly, part of the 50S ribosomal subunit. Forms a bridge to the 30S subunit in the 70S ribosome.

Its function is as follows. One of the primary rRNA binding proteins. Required for association of the 30S and 50S subunits to form the 70S ribosome, for tRNA binding and peptide bond formation. It has been suggested to have peptidyltransferase activity; this is somewhat controversial. Makes several contacts with the 16S rRNA in the 70S ribosome. In Lactiplantibacillus plantarum (strain ATCC BAA-793 / NCIMB 8826 / WCFS1) (Lactobacillus plantarum), this protein is Large ribosomal subunit protein uL2.